Consider the following 98-residue polypeptide: Small ribosomal subunit protein bS18 (98 aa).

This sequence belongs to the bacterial ribosomal protein bS18 family. In terms of assembly, part of the 30S ribosomal subunit. Forms a tight heterodimer with protein bS6.

Its function is as follows. Binds as a heterodimer with protein bS6 to the central domain of the 16S rRNA, where it helps stabilize the platform of the 30S subunit. The sequence is that of Small ribosomal subunit protein bS18 from Flavobacterium psychrophilum (strain ATCC 49511 / DSM 21280 / CIP 103535 / JIP02/86).